The sequence spans 72 residues: Large ribosomal subunit protein bL31 (72 aa).

Zn(2+) contacts are provided by Cys-16, Cys-18, Cys-38, and Cys-41.

The protein belongs to the bacterial ribosomal protein bL31 family. Type A subfamily. Part of the 50S ribosomal subunit. It depends on Zn(2+) as a cofactor.

Functionally, binds the 23S rRNA. This is Large ribosomal subunit protein bL31 from Beutenbergia cavernae (strain ATCC BAA-8 / DSM 12333 / CCUG 43141 / JCM 11478 / NBRC 16432 / NCIMB 13614 / HKI 0122).